The chain runs to 94 residues: Integration host factor subunit beta (94 aa).

Belongs to the bacterial histone-like protein family. As to quaternary structure, heterodimer of an alpha and a beta chain.

This protein is one of the two subunits of integration host factor, a specific DNA-binding protein that functions in genetic recombination as well as in transcriptional and translational control. The protein is Integration host factor subunit beta of Xanthobacter autotrophicus (strain ATCC BAA-1158 / Py2).